The chain runs to 217 residues: MOB kinase activator 3A (217 aa).

Zn(2+)-binding residues include C83, C88, H165, and H170.

The protein belongs to the MOB1/phocein family.

May regulate the activity of kinases. This chain is MOB kinase activator 3A (Mob3a), found in Mus musculus (Mouse).